Consider the following 232-residue polypeptide: uncharacterized protein (232 aa).

This is an uncharacterized protein from Escherichia coli (strain K12).